Consider the following 213-residue polypeptide: Imidazole glycerol phosphate synthase subunit HisH 1 (213 aa).

The Glutamine amidotransferase type-1 domain occupies 3-213 (SVSIVDYGVG…LSIIQQFLQI (211 aa)). Residue Cys81 is the Nucleophile of the active site. Residues His195 and Glu197 contribute to the active site.

Heterodimer of HisH and HisF.

Its subcellular location is the cytoplasm. The enzyme catalyses 5-[(5-phospho-1-deoxy-D-ribulos-1-ylimino)methylamino]-1-(5-phospho-beta-D-ribosyl)imidazole-4-carboxamide + L-glutamine = D-erythro-1-(imidazol-4-yl)glycerol 3-phosphate + 5-amino-1-(5-phospho-beta-D-ribosyl)imidazole-4-carboxamide + L-glutamate + H(+). It carries out the reaction L-glutamine + H2O = L-glutamate + NH4(+). It participates in amino-acid biosynthesis; L-histidine biosynthesis; L-histidine from 5-phospho-alpha-D-ribose 1-diphosphate: step 5/9. In terms of biological role, IGPS catalyzes the conversion of PRFAR and glutamine to IGP, AICAR and glutamate. The HisH subunit provides the glutamine amidotransferase activity that produces the ammonia necessary to HisF for the synthesis of IGP and AICAR. In Legionella pneumophila (strain Paris), this protein is Imidazole glycerol phosphate synthase subunit HisH 1.